Here is a 119-residue protein sequence, read N- to C-terminus: Large ribosomal subunit protein uL24 (119 aa).

It belongs to the universal ribosomal protein uL24 family. In terms of assembly, part of the 50S ribosomal subunit.

In terms of biological role, one of two assembly initiator proteins, it binds directly to the 5'-end of the 23S rRNA, where it nucleates assembly of the 50S subunit. One of the proteins that surrounds the polypeptide exit tunnel on the outside of the subunit. This Clavibacter michiganensis subsp. michiganensis (strain NCPPB 382) protein is Large ribosomal subunit protein uL24.